Reading from the N-terminus, the 596-residue chain is MSTSPAARPTSNPHLLGWVDEMAKLCKPDRVHWCDGSEAEKKRLTDDAVAAKVLIPLDQQKWPGCHYHHSNPSDVARVEHLTFICTPTKEQAGPTNNWMEPKEAYRKLGAIFDGSMKGRTMYVVPYVMGPSTSPFAKVGIEITDSVYVALNMGIMARMGKVALDRLGDSNEFNRGLHSVADCNPERRFICHFPQDNTIWSVGSGYGGNALLGKKCLALRIASYLAKNEGWLAEHMLILEAESPTGEKQYVAAAFPSACGKTNFAMMIPPAAFPGWKIRTVGDDISWMRVGEDGRLWAVNPENGYFGVAPGTNRKTNPNAMDSVRKDTIFTNVARTPDGDIWWEGMDHEAPAELIDWKGQPWKKGSTEKAAHPNSRFTAPAKNNPAISPLVDDPKGVPISAIIFGGRRSTTVPLVLEAFNWTHGVYLGSTMGSETTAAATGQVGVVRRDPMAMLPFIGYDCGSYLQHWLDMQSRIPNPPKIFLVNWFRKSAEGKFLWPGYGDNMRVLKWMLDRAAGRAPAKETLLGYTPGDAGLDLHGLDVSKDAIAAATRIDLGEWEQELESQAEWFEKLGKTLPAPLALQRELLLERVRAARKVK.

Substrate is bound by residues Arg77 and 205–207 (YGG). Residues Lys214 and His234 each coordinate Mn(2+). Ser256 is a binding site for substrate. GTP is bound at residue 257 to 262 (ACGKTN). The active site involves Cys258. Asp283 provides a ligand contact to Mn(2+). A disordered region spans residues 362 to 388 (KKGSTEKAAHPNSRFTAPAKNNPAISP). 373–375 (NSR) serves as a coordination point for substrate. Residues Arg375, Arg406, and 499–502 (YGDN) contribute to the GTP site.

Belongs to the phosphoenolpyruvate carboxykinase [GTP] family. As to quaternary structure, monomer. Requires Mn(2+) as cofactor.

It localises to the cytoplasm. It catalyses the reaction oxaloacetate + GTP = phosphoenolpyruvate + GDP + CO2. It functions in the pathway carbohydrate biosynthesis; gluconeogenesis. In terms of biological role, catalyzes the conversion of oxaloacetate (OAA) to phosphoenolpyruvate (PEP), the rate-limiting step in the metabolic pathway that produces glucose from lactate and other precursors derived from the citric acid cycle. The protein is Phosphoenolpyruvate carboxykinase [GTP] of Anaeromyxobacter dehalogenans (strain 2CP-C).